Consider the following 159-residue polypeptide: Transcriptional repressor NrdR (159 aa).

The tract at residues methionine 1–asparagine 22 is disordered. A zinc finger lies at cysteine 3–cysteine 34. The segment covering threonine 11–asparagine 22 has biased composition (basic and acidic residues). In terms of domain architecture, ATP-cone spans leucine 49–aspartate 139.

The protein belongs to the NrdR family. It depends on Zn(2+) as a cofactor.

In terms of biological role, negatively regulates transcription of bacterial ribonucleotide reductase nrd genes and operons by binding to NrdR-boxes. This Agrobacterium fabrum (strain C58 / ATCC 33970) (Agrobacterium tumefaciens (strain C58)) protein is Transcriptional repressor NrdR.